Reading from the N-terminus, the 400-residue chain is Carnosine N-methyltransferase (400 aa).

The disordered stretch occupies residues 1–49 (MQRRRRAPPASQPAQDSGHSEEVEVQFSAGRLGSAAPAGPPVRGTAEDE). S-adenosyl-L-methionine is bound by residues Gln-155, Arg-158, Gly-199, Glu-220, Asp-286, Phe-287, and Cys-303. Asp-307 lines the carnosine pocket. Tyr-315 serves as a coordination point for S-adenosyl-L-methionine. Residues His-338 and Tyr-389 each coordinate carnosine.

It belongs to the carnosine N-methyltransferase family. Homodimer. Each monomer accommodates one molecule of carnosine in its active pocket, precisely anchoring the histidine imidazole ring such that only N1 is exposed and deprotonated for methylation. In terms of tissue distribution, expressed at higher level in skeletal muscle compared to other tissues.

The protein localises to the cytoplasm. Its subcellular location is the cytosol. The protein resides in the nucleus. It catalyses the reaction carnosine + S-adenosyl-L-methionine = anserine + S-adenosyl-L-homocysteine + H(+). In terms of biological role, N-methyltransferase that catalyzes the formation of anserine (beta-alanyl-N(Pi)-methyl-L-histidine) from carnosine. Anserine, a methylated derivative of carnosine (beta-alanyl-L-histidine), is an abundant constituent of vertebrate skeletal muscles. Also methylates other L-histidine-containing di- and tripeptides such as Gly-Gly-His, Gly-His and homocarnosine (GABA-His). This is Carnosine N-methyltransferase from Rattus norvegicus (Rat).